Consider the following 339-residue polypeptide: Malate dehydrogenase 3, cytoplasmic (339 aa).

NAD(+) is bound by residues 22 to 23, D49, and G96; that span reads NI. R105 is an oxaloacetate binding site. Residues Q119 and N138 each contribute to the NAD(+) site. 4 residues coordinate oxaloacetate: N138, R169, H194, and S249. Residue H194 is the Proton acceptor of the active site.

This sequence belongs to the LDH/MDH superfamily. MDH type 2 family. As to expression, expressed in rosette leaves at low levels.

It is found in the cytoplasm. The catalysed reaction is (S)-malate + NAD(+) = oxaloacetate + NADH + H(+). In terms of biological role, catalyzes a reversible NAD-dependent dehydrogenase reaction involved in central metabolism and redox homeostasis between organelle compartments. This chain is Malate dehydrogenase 3, cytoplasmic, found in Arabidopsis thaliana (Mouse-ear cress).